Consider the following 752-residue polypeptide: Myb-related protein A (752 aa).

The interval 1-22 (MAKRSRSEDEDDDLQYADHDYE) is disordered. 3 consecutive HTH myb-type domains span residues 30–81 (KKLW…QKVL), 82–137 (NPEL…NPEV), and 138–188 (KKSS…RRKV). DNA-binding regions (H-T-H motif) lie at residues 58–81 (WTLI…QKVL), 110–133 (WSLI…HNHL), and 161–184 (WAEI…NSTM). Lysine 199 is covalently cross-linked (Glycyl lysine isopeptide (Lys-Gly) (interchain with G-Cter in SUMO2)). The tract at residues 230-295 (IPGYQYVSPE…RIPSQPGSFS (66 aa)) is transcriptional activation domain. Residues 298–553 (SGSFLMDDNM…IRRSILGTTP (256 aa)) are negative regulatory domain. Lysine 394 carries the N6-acetyllysine modification. The segment at 451–480 (RKMRVGHSPGSELRDGSLNDGGNMALKHTP) is disordered. Residues lysine 592 and lysine 602 each participate in a glycyl lysine isopeptide (Lys-Gly) (interchain with G-Cter in SUMO2) cross-link.

Component of the DREAM complex (also named LINC complex) at least composed of E2F4, E2F5, LIN9, LIN37, LIN52, LIN54, MYBL1, MYBL2, RBL1, RBL2, RBBP4, TFDP1 and TFDP2. The complex exists in quiescent cells where it represses cell cycle-dependent genes. It dissociates in S phase when LIN9, LIN37, LIN52 and LIN54 form a subcomplex that binds to MYBL2. In terms of tissue distribution, expressed in a variety of lymphoid and solid tumor lines cultured in vitro.

Its subcellular location is the nucleus. In terms of biological role, transcription factor that specifically recognizes the sequence 5'-YAAC[GT]G-3'. Acts as a master regulator of male meiosis by promoting expression of piRNAs: activates expression of both piRNA precursor RNAs and expression of protein-coding genes involved in piRNA metabolism. The piRNA metabolic process mediates the repression of transposable elements during meiosis by forming complexes composed of piRNAs and Piwi proteins and governs the methylation and subsequent repression of transposons, which is essential for the germline integrity. Transcriptional activator of SOX30. The sequence is that of Myb-related protein A (MYBL1) from Homo sapiens (Human).